We begin with the raw amino-acid sequence, 611 residues long: Actin-related protein 5 (611 aa).

2 coiled-coil regions span residues 290–329 (TLTS…LDRL) and 355–386 (SAEE…NIEV).

It belongs to the actin family. ARP5 subfamily. In terms of assembly, component of the chromatin remodeling INO80 complex.

The protein localises to the nucleus. In terms of biological role, proposed core component of the chromatin remodeling INO80 complex which is involved in transcriptional regulation, DNA replication and probably DNA repair. This is Actin-related protein 5 (ACTR5) from Gallus gallus (Chicken).